The chain runs to 309 residues: Porphobilinogen deaminase (309 aa).

At C244 the chain carries S-(dipyrrolylmethanemethyl)cysteine.

It belongs to the HMBS family. As to quaternary structure, monomer. It depends on dipyrromethane as a cofactor.

The catalysed reaction is 4 porphobilinogen + H2O = hydroxymethylbilane + 4 NH4(+). Its pathway is porphyrin-containing compound metabolism; protoporphyrin-IX biosynthesis; coproporphyrinogen-III from 5-aminolevulinate: step 2/4. Its function is as follows. Tetrapolymerization of the monopyrrole PBG into the hydroxymethylbilane pre-uroporphyrinogen in several discrete steps. In Rhizobium meliloti (strain 1021) (Ensifer meliloti), this protein is Porphobilinogen deaminase.